The following is a 383-amino-acid chain: Acetyl-CoA acetyltransferase (383 aa).

Cys85 acts as the Acyl-thioester intermediate in catalysis. CoA-binding residues include Cys206, Ser207, Ile209, and Lys328. Residue His332 is the Proton acceptor of the active site.

It belongs to the thiolase-like superfamily. Thiolase family. As to quaternary structure, interacts with HMG-CoA synthase (HMGCS) that catalyzes the second step in the pathway and with a DUF35 protein. The acetoacetyl-CoA thiolase/HMG-CoA synthase complex channels the intermediate via a fused CoA-binding site, which allows for efficient coupling of the endergonic thiolase reaction with the exergonic HMGCS reaction.

It catalyses the reaction 2 acetyl-CoA = acetoacetyl-CoA + CoA. Its pathway is metabolic intermediate biosynthesis; (R)-mevalonate biosynthesis; (R)-mevalonate from acetyl-CoA: step 1/3. In terms of biological role, catalyzes the condensation of two acetyl-coA molecules into acetoacetyl-CoA. Functions in the mevalonate (MVA) pathway leading to isopentenyl diphosphate (IPP), a key precursor for the biosynthesis of isoprenoid compounds that are building blocks of archaeal membrane lipids. The chain is Acetyl-CoA acetyltransferase from Methanothermobacter thermautotrophicus (strain ATCC 29096 / DSM 1053 / JCM 10044 / NBRC 100330 / Delta H) (Methanobacterium thermoautotrophicum).